Consider the following 225-residue polypeptide: LysM and putative peptidoglycan-binding domain-containing protein 1 (225 aa).

2 positions are modified to phosphoserine: Ser23 and Ser33. The LysM domain occupies 40 to 84; it reads LEHQLAPGDTLAGLALKYGVTMEQIKRANRLYTNDSIFLKKTLHI. The segment at 97-153 is disordered; it reads LDSEEEKDGEEAVQPSKDEVRPHSAERKKRERGLGHANGEPLPTAGQEPARHDLSAS. Over residues 98–107 the composition is skewed to acidic residues; that stretch reads DSEEEKDGEE. At Ser99 the chain carries Phosphoserine. Residues 112-121 show a composition bias toward basic and acidic residues; the sequence is SKDEVRPHSA. 4 positions are modified to phosphoserine: Ser164, Ser179, Ser192, and Ser210. Residues 170 to 225 form a disordered region; the sequence is AAQKLKKGESGIPGEDSSLHLSSPRMQQRAVLGPVPLTQTSRTRTLRDQEDEIFKL. Positions 214–225 are enriched in basic and acidic residues; the sequence is TLRDQEDEIFKL.

This chain is LysM and putative peptidoglycan-binding domain-containing protein 1 (LYSMD1), found in Bos taurus (Bovine).